The chain runs to 295 residues: (R)-3-hydroxydecanoyl-ACP:CoA transacylase (295 aa).

Residues 28–254 (NTIILINGSL…VIRDAGHFLD (227 aa)) enclose the AB hydrolase-1 domain.

The protein operates within polyester biosynthesis; polyhydroxyalkanoate biosynthesis. Functionally, catalyzes the transfer of the acyl moiety from in vitro synthesized 3-hydroxydecanoyl-CoA to acyl carrier protein. This chain is (R)-3-hydroxydecanoyl-ACP:CoA transacylase (phaG), found in Pseudomonas putida (strain ATCC 47054 / DSM 6125 / CFBP 8728 / NCIMB 11950 / KT2440).